A 213-amino-acid chain; its full sequence is Bcl-2-related ovarian killer protein (213 aa).

Positions 32–44 match the BH4 motif; sequence KALCRDYINSRLI. The short motif at 67 to 83 is the BH3 element; it reads VSAILLRLGDELEYIRP. The BH1 signature appears at 113-132; it reads QIFTAGITWGKVVSLYAVAA. The BH2 motif lies at 165 to 179; that stretch reads WLKRRGGWADITKCV. A helical membrane pass occupies residues 190–210; sequence WLVAAVCSFGHFLKAIFFVLL.

This sequence belongs to the Bcl-2 family.

Its subcellular location is the membrane. Its function is as follows. May play a role in apoptosis. This Gallus gallus (Chicken) protein is Bcl-2-related ovarian killer protein.